The sequence spans 354 residues: MGIEPNILENKKRHIEICLNKNDVKGGCNFLKFIKLKHNALSDFNFSEISLKEEIFGYNINMPVFISSMTGGGKQGNDFNKSLVKIANYLKIPIGLGSFKLLFKYPEYIRDFSLKRYAYDIPLFANIGAVQIVEFGISRIAEMIKRLEVDAIVTHLNAGQELMNVNGDRNFKGIKESIAKLADFLSVPLIVKETGFGISPNDVKELLKLGVSYIDLAGSGGTNWVLVEGIRSNNLNVASCFSDWGIPSIFTLLGIDDSLKANVFASGGYETGMDIAKGIALGAKLIGVAAVVLRAFYNSGEDAVLSLFSDYEHVLKMSMFLSGSKSLSELRKNKYFLSSYLLAELGVFKQFYET.

11-12 (KK) serves as a coordination point for substrate. Residues Ser67, 68 to 70 (SMT), Ser98, and Asn126 each bind FMN. 98–100 (SFK) is a binding site for substrate. Gln160 contributes to the substrate binding site. Glu161 provides a ligand contact to Mg(2+). FMN is bound by residues Lys192, Thr222, and 289-290 (AA).

The protein belongs to the IPP isomerase type 2 family. In terms of assembly, homooctamer. Dimer of tetramers. FMN serves as cofactor. The cofactor is NADPH. Requires Mg(2+) as cofactor.

The protein resides in the cytoplasm. The enzyme catalyses isopentenyl diphosphate = dimethylallyl diphosphate. Its function is as follows. Involved in the biosynthesis of isoprenoids. Catalyzes the 1,3-allylic rearrangement of the homoallylic substrate isopentenyl (IPP) to its allylic isomer, dimethylallyl diphosphate (DMAPP). This Borrelia garinii subsp. bavariensis (strain ATCC BAA-2496 / DSM 23469 / PBi) (Borreliella bavariensis) protein is Isopentenyl-diphosphate delta-isomerase.